We begin with the raw amino-acid sequence, 206 residues long: Glycerol-3-phosphate acyltransferase (206 aa).

5 consecutive transmembrane segments (helical) span residues 14–34, 67–87, 91–111, 124–144, and 148–168; these read IALA…GLIL, ATLL…GYFL, AAII…WIGF, LLGV…AVAV, and YSSL…LILG.

Belongs to the PlsY family. As to quaternary structure, probably interacts with PlsX.

It is found in the cell inner membrane. The enzyme catalyses an acyl phosphate + sn-glycerol 3-phosphate = a 1-acyl-sn-glycero-3-phosphate + phosphate. It participates in lipid metabolism; phospholipid metabolism. In terms of biological role, catalyzes the transfer of an acyl group from acyl-phosphate (acyl-PO(4)) to glycerol-3-phosphate (G3P) to form lysophosphatidic acid (LPA). This enzyme utilizes acyl-phosphate as fatty acyl donor, but not acyl-CoA or acyl-ACP. The protein is Glycerol-3-phosphate acyltransferase of Rhizobium etli (strain ATCC 51251 / DSM 11541 / JCM 21823 / NBRC 15573 / CFN 42).